A 231-amino-acid polypeptide reads, in one-letter code: Biosynthetic peptidoglycan transglycosylase (231 aa).

The chain crosses the membrane as a helical span at residues 7–27 (LLFWLILVPILLVLLMQLYFF).

It belongs to the glycosyltransferase 51 family.

It is found in the cell inner membrane. The enzyme catalyses [GlcNAc-(1-&gt;4)-Mur2Ac(oyl-L-Ala-gamma-D-Glu-L-Lys-D-Ala-D-Ala)](n)-di-trans,octa-cis-undecaprenyl diphosphate + beta-D-GlcNAc-(1-&gt;4)-Mur2Ac(oyl-L-Ala-gamma-D-Glu-L-Lys-D-Ala-D-Ala)-di-trans,octa-cis-undecaprenyl diphosphate = [GlcNAc-(1-&gt;4)-Mur2Ac(oyl-L-Ala-gamma-D-Glu-L-Lys-D-Ala-D-Ala)](n+1)-di-trans,octa-cis-undecaprenyl diphosphate + di-trans,octa-cis-undecaprenyl diphosphate + H(+). It functions in the pathway cell wall biogenesis; peptidoglycan biosynthesis. Functionally, peptidoglycan polymerase that catalyzes glycan chain elongation from lipid-linked precursors. This chain is Biosynthetic peptidoglycan transglycosylase, found in Herminiimonas arsenicoxydans.